The chain runs to 38 residues: Exendin-1 (38 aa).

O-linked (HexNAc...) serine; in Exendin-1 and Exendin-1b glycosylation occurs at serine 32.

This sequence belongs to the glucagon family. O-linked glycan consists of Hex-HexNAc saccharide. Post-translationally, glycosylation may be of interest for the biological stability of exendin-1 and exendin-1b. In terms of tissue distribution, expressed by the venom gland.

The protein resides in the secreted. O-linked and free exendin-1 and exendin-1b have vasoactive intestinal peptide(VIP)/secretin-like biological activities. They interact with rat and human VIP receptors 1 (VIPR1) and 2 (VIPR2), with the highest affinity for the human VIPR2. They induce hypotension that is mediated by relaxation of cardiac smooth muscle. The protein is Exendin-1 of Heloderma horridum horridum (Mexican beaded lizard).